The sequence spans 99 residues: Small ribosomal subunit protein uS14m (99 aa).

It belongs to the universal ribosomal protein uS14 family.

It localises to the mitochondrion. This chain is Small ribosomal subunit protein uS14m (RPS14), found in Marchantia polymorpha (Common liverwort).